A 263-amino-acid polypeptide reads, in one-letter code: ATP synthase subunit delta (263 aa).

This sequence belongs to the ATPase delta chain family. F-type ATPases have 2 components, F(1) - the catalytic core - and F(0) - the membrane proton channel. F(1) has five subunits: alpha(3), beta(3), gamma(1), delta(1), epsilon(1). F(0) has three main subunits: a(1), b(2) and c(10-14). The alpha and beta chains form an alternating ring which encloses part of the gamma chain. F(1) is attached to F(0) by a central stalk formed by the gamma and epsilon chains, while a peripheral stalk is formed by the delta and b chains.

The protein localises to the cell membrane. Functionally, f(1)F(0) ATP synthase produces ATP from ADP in the presence of a proton or sodium gradient. F-type ATPases consist of two structural domains, F(1) containing the extramembraneous catalytic core and F(0) containing the membrane proton channel, linked together by a central stalk and a peripheral stalk. During catalysis, ATP synthesis in the catalytic domain of F(1) is coupled via a rotary mechanism of the central stalk subunits to proton translocation. This protein is part of the stalk that links CF(0) to CF(1). It either transmits conformational changes from CF(0) to CF(1) or is implicated in proton conduction. The protein is ATP synthase subunit delta of Cutibacterium acnes (strain DSM 16379 / KPA171202) (Propionibacterium acnes).